Consider the following 236-residue polypeptide: MSSGADGGGGAAVAARSDKGSPGEDGFVPSALGTREHWDAVYERELQTFREYGDTGEIWFGEESMNRLIRWMQKHKIPLDASVLDIGTGNGVFLVELAKFGFSNITGIDYSPSAIQLSGSIIEKEGLSNIKLKVEDFLNLSTQLSGFHICIDKGTFDAISLNPDNAIEKRKQYVKSLSRVLKVKGFFLITSCNWTKEELLNEFSEGFELLEELPTPKFSFGGRSGNSVAALVFQKM.

Residues 1–11 (MSSGADGGGGA) show a composition bias toward gly residues. The disordered stretch occupies residues 1-31 (MSSGADGGGGAAVAARSDKGSPGEDGFVPSA). An N-acetylserine modification is found at Ser-2. The residue at position 21 (Ser-21) is a Phosphoserine.

The protein belongs to the class I-like SAM-binding methyltransferase superfamily. EFM4 family.

Its subcellular location is the cytoplasm. It localises to the nucleus. The catalysed reaction is L-lysyl-[protein] + 3 S-adenosyl-L-methionine = N(6),N(6),N(6)-trimethyl-L-lysyl-[protein] + 3 S-adenosyl-L-homocysteine + 3 H(+). In terms of biological role, protein-lysine methyltransferase that selectively catalyzes the trimethylation of EEF1A at 'Lys-318'. The chain is EEF1A lysine methyltransferase 2 from Homo sapiens (Human).